A 388-amino-acid polypeptide reads, in one-letter code: GTPase Obg (388 aa).

Positions 1–159 (MKFVDEANIR…RSIKLELLLL (159 aa)) constitute an Obg domain. Positions 160–333 (ADVGLLGMPN…LSIKMLDYIR (174 aa)) constitute an OBG-type G domain. GTP is bound by residues 166-173 (GMPNAGKS), 191-195 (FTTLV), 213-216 (DIPG), 283-286 (NKTD), and 314-316 (SAY). Residues serine 173 and threonine 193 each contribute to the Mg(2+) site.

It belongs to the TRAFAC class OBG-HflX-like GTPase superfamily. OBG GTPase family. As to quaternary structure, monomer. Requires Mg(2+) as cofactor.

It is found in the cytoplasm. Functionally, an essential GTPase which binds GTP, GDP and possibly (p)ppGpp with moderate affinity, with high nucleotide exchange rates and a fairly low GTP hydrolysis rate. Plays a role in control of the cell cycle, stress response, ribosome biogenesis and in those bacteria that undergo differentiation, in morphogenesis control. In Shewanella frigidimarina (strain NCIMB 400), this protein is GTPase Obg.